The sequence spans 521 residues: Insulinoma-associated protein 1 (521 aa).

Residues 1-12 (MPRGFLVKRSKK) are compositionally biased toward basic residues. Residues 1–20 (MPRGFLVKRSKKSTPVSYRV) form an SNAG domain region. Disordered stretches follow at residues 1–59 (MPRG…PPAL), 76–107 (GPPP…PTRP), and 180–230 (AEAA…KPKA). The tract at residues 2–7 (PRGFLV) is required and sufficient for interaction with KDM1A. The segment at 43–56 (PPVPSPGPLPPPPP) is necessary for interaction with CCND1. Pro residues-rich tracts occupy residues 43–58 (PPVP…PPPA) and 76–85 (GPPPPPPPGP). A compositionally biased stretch (low complexity) spans 209–223 (AAVATEPPAKAAKAP). Residues 272 to 292 (FICQLCKEEYADPFALAQHKC) form a C2H2-type 1; atypical zinc finger. The C2H2-type 2 zinc-finger motif lies at 300 to 322 (YRCPECAKVFSCPANLASHRRWH). Residues 320 to 369 (RWHKPRPVPAAARAPEPEAATRAEAREAAGGGSSDRDTPSPGGVSESGSE) form a disordered region. The segment covering 334–346 (PEPEAATRAEARE) has biased composition (basic and acidic residues). The C2H2-type 3 zinc finger occupies 373 to 395 (YECHHCAKKFRRQAYLRKHLLAH). The segment at 398 to 419 (ALQAKGAPPPPPPPPPPAEDIL) is disordered. Positions 404–415 (APPPPPPPPPPA) are enriched in pro residues. 2 consecutive C2H2-type zinc fingers follow at residues 452–475 (HLCP…RLLH) and 480–503 (FPCK…NKCH).

It belongs to the INSM1 family. As to quaternary structure, interacts (via the N-terminal region) with CCND1 (via cyclin N-terminal domain); the interaction competes with the binding of CCND1 to CDK4 during cell cycle progression and increases its transcriptional repressor activity. Interacts with HDAC3; the interaction increases its transcriptional repressor activity. Interacts (via the SNAG domain) with HDAC1. Interacts (via the SNAG domain) with HDAC2. Interacts (via the SNAG domain) with KDM1A. Interacts (via the SNAG domain) with RCOR1. Interacts with SORBS1. In terms of tissue distribution, expressed in adrenal gland. Expressed in the dentate gyrus of the hippocampus and the wall of the lateral ventricle. Expressed in pancreatic and intestinal endocrine cells.

The protein localises to the nucleus. Functionally, sequence-specific DNA-binding transcriptional regulator that plays a key role in neurogenesis and neuroendocrine cell differentiation during embryonic and/or fetal development. Binds to the consensus sequence 5'-[TG][TC][TC][TT][GA]GGG[CG]A-3' in target promoters. Acts as a transcriptional repressor of NEUROD1 and INS expression via its interaction with cyclin CCND1 in a cell cycle-independent manner. Negatively regulates skeletal muscle-specific gene expression in endocrine cells of the pituitary by inhibiting the Notch signaling pathway. Represses target gene transcription by recruiting chromatin-modifying factors, such as HDAC1, HDAC2, HDAC3, KDM1A and RCOR1 histone deacetylases. Binds to its own promoter, suggesting autoregulation as a self-control feedback mechanism. Competes with histone H3 for the same binding site on the histone demethylase complex formed by KDM1A and RCOR1, and thereby inhibits demethylation of histone H3 at 'Lys-4'. Promotes the generation and expansion of neuronal basal progenitor cells in the developing neocortex. Involved in the differentiation of endocrine cells of the developing anterior pituitary gland, of the pancreas and intestine, and of sympatho-adrenal cells in the peripheral nervous system. Promotes cell cycle signaling arrest and inhibition of cellular proliferation. The protein is Insulinoma-associated protein 1 (Insm1) of Mus musculus (Mouse).